The sequence spans 757 residues: Ecdysone receptor (757 aa).

Residues 1–300 (MMKRRWSNNG…GPAPRLQEEL (300 aa)) form a modulating region. Disordered regions lie at residues 126–192 (NSVG…GGGG) and 235–289 (LNHH…KKIK). Positions 128-138 (VGGGGGGGGVP) are enriched in gly residues. A compositionally biased stretch (low complexity) spans 167–183 (NSNSNHSNSSSHHTNGH). NR C4-type zinc fingers lie at residues 301–321 (CLVC…CEGC) and 337–361 (CKFG…LKKC). A DNA-binding region (nuclear receptor) is located at residues 301–373 (CLVCGDRASG…VGMRPECVVP (73 aa)). An NR LBD domain is found at 442-677 (NQLAVIYKLI…FLEEIWDVHA (236 aa)). Positions 717 to 734 (TSMATSSSSSLSPSAAST) are enriched in low complexity. Residues 717 to 739 (TSMATSSSSSLSPSAASTPNGGA) are disordered.

The protein belongs to the nuclear hormone receptor family. NR1 subfamily.

It is found in the nucleus. Functionally, receptor for ecdysone. Binds to ecdysone response elements (ECRES). This is Ecdysone receptor (EcR) from Lucilia cuprina (Green bottle fly).